We begin with the raw amino-acid sequence, 350 residues long: Hydroxymethylglutaryl-CoA synthase (350 aa).

E83 serves as the catalytic Proton donor/acceptor. C115 serves as the catalytic Acyl-thioester intermediate. (3S)-3-hydroxy-3-methylglutaryl-CoA is bound by residues C115 and T156. R204 lines the CoA pocket. Residues T206 and H239 each contribute to the (3S)-3-hydroxy-3-methylglutaryl-CoA site. The Proton donor/acceptor role is filled by H239. K244 provides a ligand contact to CoA. (3S)-3-hydroxy-3-methylglutaryl-CoA contacts are provided by N271 and S301.

This sequence belongs to the thiolase-like superfamily. Archaeal HMG-CoA synthase family. Interacts with acetoacetyl-CoA thiolase that catalyzes the precedent step in the pathway and with a DUF35 protein. The acetoacetyl-CoA thiolase/HMG-CoA synthase complex channels the intermediate via a fused CoA-binding site, which allows for efficient coupling of the endergonic thiolase reaction with the exergonic HMGCS reaction.

It catalyses the reaction acetoacetyl-CoA + acetyl-CoA + H2O = (3S)-3-hydroxy-3-methylglutaryl-CoA + CoA + H(+). Its pathway is metabolic intermediate biosynthesis; (R)-mevalonate biosynthesis; (R)-mevalonate from acetyl-CoA: step 2/3. In terms of biological role, catalyzes the condensation of acetyl-CoA with acetoacetyl-CoA to form 3-hydroxy-3-methylglutaryl-CoA (HMG-CoA). Functions in the mevalonate (MVA) pathway leading to isopentenyl diphosphate (IPP), a key precursor for the biosynthesis of isoprenoid compounds that are building blocks of archaeal membrane lipids. In Pyrococcus horikoshii (strain ATCC 700860 / DSM 12428 / JCM 9974 / NBRC 100139 / OT-3), this protein is Hydroxymethylglutaryl-CoA synthase.